Consider the following 67-residue polypeptide: ATP synthase F(0) complex subunit 8 (67 aa).

The helical transmembrane segment at 8 to 24 (TWFITIISSMITLFILF) threads the bilayer. Lys-54 carries the post-translational modification N6-acetyllysine; alternate. Lys-54 is subject to N6-succinyllysine; alternate. Lys-57 bears the N6-acetyllysine mark.

This sequence belongs to the ATPase protein 8 family. In terms of assembly, component of the ATP synthase complex composed at least of ATP5F1A/subunit alpha, ATP5F1B/subunit beta, ATP5MC1/subunit c (homooctomer), MT-ATP6/subunit a, MT-ATP8/subunit 8, ATP5ME/subunit e, ATP5MF/subunit f, ATP5MG/subunit g, ATP5MK/subunit k, ATP5MJ/subunit j, ATP5F1C/subunit gamma, ATP5F1D/subunit delta, ATP5F1E/subunit epsilon, ATP5PF/subunit F6, ATP5PB/subunit b, ATP5PD/subunit d, ATP5PO/subunit OSCP. ATP synthase complex consists of a soluble F(1) head domain (subunits alpha(3) and beta(3)) - the catalytic core - and a membrane F(0) domain - the membrane proton channel (subunits c, a, 8, e, f, g, k and j). These two domains are linked by a central stalk (subunits gamma, delta, and epsilon) rotating inside the F1 region and a stationary peripheral stalk (subunits F6, b, d, and OSCP). Interacts with PRICKLE3.

The protein resides in the mitochondrion membrane. Functionally, subunit 8, of the mitochondrial membrane ATP synthase complex (F(1)F(0) ATP synthase or Complex V) that produces ATP from ADP in the presence of a proton gradient across the membrane which is generated by electron transport complexes of the respiratory chain. ATP synthase complex consist of a soluble F(1) head domain - the catalytic core - and a membrane F(1) domain - the membrane proton channel. These two domains are linked by a central stalk rotating inside the F(1) region and a stationary peripheral stalk. During catalysis, ATP synthesis in the catalytic domain of F(1) is coupled via a rotary mechanism of the central stalk subunits to proton translocation. In vivo, can only synthesize ATP although its ATP hydrolase activity can be activated artificially in vitro. Part of the complex F(0) domain. The protein is ATP synthase F(0) complex subunit 8 of Mus musculus (Mouse).